The chain runs to 474 residues: PRAME family member 8 (474 aa).

An LRR 1; degenerate repeat occupies 97–122 (QSKLQVLDLRNVDENFCDIFSGATAS). The stretch at 177–201 (HVCCKELQVFGMPIHSIIEVLNMVE) is one LRR 2; degenerate repeat. The stretch at 202 to 228 (LDCIQEVEVCCPWELSTLVKFAPYLGQ) is one LRR 3; degenerate repeat. The stretch at 229–264 (MRNLRKLVLFNIRASACIPPDNKGQFIARFTSQFLK) is one LRR 4; degenerate repeat. 5 LRR repeats span residues 265–290 (LDYFQNLSMHSVSFLEGHLDQLLRCL), 291–322 (QASLEMVVMTDCLLSESDLKHLSWCPSIRQLK), 323–341 (ELDLRGVTLTHFSPEPLTG), 347–374 (VATLQTLDLEDCGIMDSQLSAILPVLSR), and 375–399 (CSQLSTFSFCGNLISMAALENLLRH).

This sequence belongs to the PRAME family.

This chain is PRAME family member 8, found in Homo sapiens (Human).